The sequence spans 240 residues: Homeobox protein DLX-4 (240 aa).

Disordered regions lie at residues 44–70 (DLSY…DSYL) and 175–194 (LKQS…PSLS). The segment at residues 116 to 175 (LRKPRTIYSSLQLQHLNQRFQHTQYLALPERAQLAAQLGLTQTQVKIWFQNKRSKYKKLL) is a DNA-binding region (homeobox).

This sequence belongs to the distal-less homeobox family. As to expression, branchial arches, molar and incisor teeth and limbs.

The protein localises to the nucleus. Functionally, may play a role in determining the production of hemoglobin S. May act as a repressor. During embryonic development, plays a role in palatogenesis. This is Homeobox protein DLX-4 (Dlx4) from Mus musculus (Mouse).